A 1002-amino-acid polypeptide reads, in one-letter code: TOG array regulator of axonemal microtubules protein 2 (1002 aa).

5 disordered regions span residues 54-74 (SSVL…EDQS), 131-214 (KRRL…SAQE), 332-351 (ETRS…KVQV), 402-421 (PLRG…PRRN), and 426-450 (LQRK…GFAR).

This sequence belongs to the Crescerin family.

This is TOG array regulator of axonemal microtubules protein 2 (Togaram2) from Mus musculus (Mouse).